A 361-amino-acid polypeptide reads, in one-letter code: 5-exo-hydroxycamphor dehydrogenase (361 aa).

6 residues coordinate Zn(2+): Cys40, His62, Cys98, Cys101, Cys104, and Cys170.

This sequence belongs to the zinc-containing alcohol dehydrogenase family. Zn(2+) is required as a cofactor.

The catalysed reaction is (1R,4R,5R)-5-hydroxycamphor + NAD(+) = (1R,4R)-bornane-2,5-dione + NADH + H(+). The protein operates within terpene metabolism; (R)-camphor degradation. The sequence is that of 5-exo-hydroxycamphor dehydrogenase (camD) from Pseudomonas putida (Arthrobacter siderocapsulatus).